Here is a 539-residue protein sequence, read N- to C-terminus: Sporozoite-associated protein (539 aa).

N-linked (GlcNAc...) asparagine glycosylation is found at Asn-31, Asn-90, Asn-102, Asn-149, and Asn-167. Positions 126-153 are disordered; it reads LTQSPPPAAAPQSPSPRAILSPRNVSKT. A compositionally biased stretch (low complexity) spans 192-215; the sequence is VVAEKSNTPTTPKTTPNGKWTGKN. The tract at residues 192 to 231 is disordered; it reads VVAEKSNTPTTPKTTPNGKWTGKNANATIETSNTDHTPPS. Over residues 216 to 228 the composition is skewed to polar residues; it reads ANATIETSNTDHT. N-linked (GlcNAc...) asparagine glycosylation is found at Asn-217, Asn-271, and Asn-288. A disordered region spans residues 303–355; the sequence is TLISRAQDDKPGTKGGSDETSSSTAASNERQPMFPNDNDDDDIDQTYCPGVES. Residues 320–332 show a composition bias toward polar residues; that stretch reads DETSSSTAASNER. N-linked (GlcNAc...) asparagine glycosylation is found at Asn-427 and Asn-503.

In terms of tissue distribution, saliva (at protein level). Female salivary gland. Female midgut.

It is found in the secreted. Functionally, binds heparan sulfate proteoglycans present on the mammalian cell surface. Modulates host immune responses at the site of inoculation via decreasing the expression of TNF-alpha/TNF, IL-1beta/IL1B, IFN-gamma/IFNG, IL4, MMP9, TGF-beta and ICAM1. In terms of biological role, (Microbial infection) Interacts with the surface of Plasmodium berghei sporozoites. Promotes Plasmodium berghei transmission to the mouse host. Does not affect Plasmodium berghei sporozoite viability. Its function is as follows. (Microbial infection) Interacts with the surface of Plasmodium falciparum sporozoites. This is Sporozoite-associated protein from Anopheles gambiae (African malaria mosquito).